Here is a 176-residue protein sequence, read N- to C-terminus: Dynein light chain Tctex-type 5-B (176 aa).

Belongs to the dynein light chain Tctex-type family.

The protein is Dynein light chain Tctex-type 5-B (Dynlt5-b) of Xenopus laevis (African clawed frog).